A 910-amino-acid polypeptide reads, in one-letter code: Short transient receptor potential channel 3 (910 aa).

The tract at residues 1-93 is disordered; sequence MSTKVKKCRE…VRGPAFMFGA (93 aa). The Cytoplasmic portion of the chain corresponds to 1 to 448; it reads MSTKVKKCRE…KILRSPFMKF (448 aa). Acidic residues predominate over residues 19 to 29; sequence PEEEEDGEAEG. Residues 48-58 show a composition bias toward pro residues; sequence PPCPRAPPSPG. Residues 59–68 show a composition bias toward low complexity; that stretch reads PDASSEGSPS. 4 ANK repeats span residues 100–129, 135–164, 166–192, and 221–250; these read AEEE…TLNV, MGQN…LARI, DALL…FAAS, and PDIT…RIER. Glutamate 147 lines the Ca(2+) pocket. Residues 449 to 466 traverse the membrane as a helical segment; sequence VAHAASFIIFLGLLVFNA. The Extracellular segment spans residues 467–497; sequence SDRFEGITTLPNITVIDYPKQIFRVKTTQFT. Asparagine 478 is a glycosylation site (N-linked (GlcNAc...) asparagine). The chain crosses the membrane as a helical span at residues 498 to 516; that stretch reads WTEMLIMVWVLGMMWSECK. 3 residues coordinate Ca(2+): glutamate 514, glutamate 517, and asparagine 532. At 517–529 the chain is on the cytoplasmic side; the sequence is ELWLEGPREYIVQ. The chain crosses the membrane as a helical span at residues 530 to 551; that stretch reads LWNVLDFGMLSIFIAAFTARFL. Residues 552–595 lie on the Extracellular side of the membrane; that stretch reads AFLQATKAQQYVDSHVQESDLSEVTLPPEVQYFTYARDKWLPSD. Residues 596–619 traverse the membrane as a helical segment; that stretch reads PQIISEGLYAIAVVLSFSRIAYIL. Over 620 to 638 the chain is Cytoplasmic; the sequence is PANESFGPLQISLGRTVKD. Residues 623–652 form an ANK 5 repeat; that stretch reads ESFGPLQISLGRTVKDIFKFMVLFIMVFLA. A helical transmembrane segment spans residues 639–662; sequence IFKFMVLFIMVFLAFMIGMFILYS. At 663–702 the chain is on the extracellular side; it reads YYLGAKVNPAFTTVEESFKTLFWSIFGLSEVTSVVLKYDH. A helical membrane pass occupies residues 703–728; that stretch reads KFIENIGYVLYGIYNVTMVVVLLNML. At 729–910 the chain is on the cytoplasmic side; the sequence is IAMINSSYQE…KLNPSVLRCE (182 aa). Ca(2+)-binding residues include glutamate 860, glutamate 863, glutamate 865, and aspartate 872.

This sequence belongs to the transient receptor (TC 1.A.4) family. STrpC subfamily. TRPC3 sub-subfamily. Homotetramer. Interacts with ITPR1, ITPR3, MX1 and RNF24. Interacts with JPH2; the interaction is involved in maintaining Ca(2+) homeostasis in skeletal muscle and is mediated by JPH2 'Ser-165' phosphorylation. Abundantly expressed in brain. Concentrated in cerebellar Purkinje cells and sparsely localized in cerebellar granule lyer, pontine nuclei and thalamus. Lower levels detected in other tissues.

The protein resides in the cell membrane. The enzyme catalyses Ca(2+)(in) = Ca(2+)(out). Its activity is regulated as follows. Activated by diacylglycerol (DAG) in a membrane-delimited fashion, independently of protein kinase C. Activated by inositol 1,4,5-triphosphate receptors (ITPR) with bound IP3. May be activated by internal calcium store depletion. Inhibited by intracellular Ca(2+). In terms of biological role, forms a receptor-activated non-selective calcium permeant cation channel. May be operated by a phosphatidylinositol second messenger system activated by receptor tyrosine kinases or G-protein coupled receptors. This Mus musculus (Mouse) protein is Short transient receptor potential channel 3 (Trpc3).